Reading from the N-terminus, the 122-residue chain is Large ribosomal subunit protein uL14 (122 aa).

The protein belongs to the universal ribosomal protein uL14 family. In terms of assembly, part of the 50S ribosomal subunit. Forms a cluster with proteins L3 and L19. In the 70S ribosome, L14 and L19 interact and together make contacts with the 16S rRNA in bridges B5 and B8.

Binds to 23S rRNA. Forms part of two intersubunit bridges in the 70S ribosome. This Corynebacterium glutamicum (strain R) protein is Large ribosomal subunit protein uL14.